The sequence spans 97 residues: MDSSSSSSAAGLGAVDPQLQHFIEVETQKQRFQQLVHQMTELCWEKCMDKPGPKLDSRAEACFVNCVERFIDTSQFILNRLEQTQKSKPVFSESLSD.

The Twin CX3C motif signature appears at 43 to 66 (CWEKCMDKPGPKLDSRAEACFVNC). Intrachain disulfides connect Cys43/Cys66 and Cys47/Cys62. Phosphoserine occurs at positions 57, 87, 94, and 96.

It belongs to the small Tim family. As to quaternary structure, heterohexamer; composed of 3 copies of TIMM8A and 3 copies of TIMM13, named soluble 70 kDa complex. Associates with the TIM22 complex, whose core is composed of TIMM22. In terms of tissue distribution, highly expressed in fetal and adult brain, followed by fetal lung, liver and kidney. Also expressed in heart, placenta, lung, liver, kidney, pancreas, skeletal muscle and heart.

It is found in the mitochondrion inner membrane. Its function is as follows. Mitochondrial intermembrane chaperone that participates in the import and insertion of some multi-pass transmembrane proteins into the mitochondrial inner membrane. Also required for the transfer of beta-barrel precursors from the TOM complex to the sorting and assembly machinery (SAM complex) of the outer membrane. Acts as a chaperone-like protein that protects the hydrophobic precursors from aggregation and guide them through the mitochondrial intermembrane space. The TIMM8-TIMM13 complex mediates the import of proteins such as TIMM23, SLC25A12/ARALAR1 and SLC25A13/ARALAR2, while the predominant TIMM9-TIMM10 70 kDa complex mediates the import of much more proteins. Probably necessary for normal neurologic development. The polypeptide is Mitochondrial import inner membrane translocase subunit Tim8 A (TIMM8A) (Homo sapiens (Human)).